Here is a 184-residue protein sequence, read N- to C-terminus: MAKHNEKELADTSKFLSFVLRHKPEAIGIVLDREGWADIDKLILCAQKAGKRLTRALLDTVVATSDKKRFSYSSDGRCIRAVQGHSTSQVAISFAEKTPPQFLYHGTASRFLDEIKKQGLIAGDRHYVHLSADEATARKVGARHGSPVVLTVKAQEMAKRGIPFWQAENGVWLTSTVAVEFLEW.

It belongs to the KptA/TPT1 family.

In terms of biological role, removes the 2'-phosphate from RNA via an intermediate in which the phosphate is ADP-ribosylated by NAD followed by a presumed transesterification to release the RNA and generate ADP-ribose 1''-2''-cyclic phosphate (APPR&gt;P). May function as an ADP-ribosylase. This is Probable RNA 2'-phosphotransferase from Shigella boydii serotype 18 (strain CDC 3083-94 / BS512).